An 810-amino-acid polypeptide reads, in one-letter code: Sister chromatid cohesion 1 protein 2 (810 aa).

3 disordered regions span residues 200–244, 273–315, and 606–626; these read RDTT…LLEP, SHES…SECG, and MGAS…AETP. 2 stretches are compositionally biased toward basic and acidic residues: residues 220 to 234 and 273 to 310; these read EPSR…HRED and SHES…DRSL. Residues 606-622 are compositionally biased toward polar residues; that stretch reads MGASSTTSGTAHQTENA.

This sequence belongs to the rad21 family. In terms of assembly, component of the cohesin complex. Low expression in shoots, buds, siliques, leaves and roots. Found in, but not limited to, actively dividing cells: in procambium, protoderm and ground meristem in roots, and in shoot and floral meristems.

The protein localises to the nucleus. In terms of biological role, may be involved in sister chromatid cohesion during mitosis. This is Sister chromatid cohesion 1 protein 2 (SYN2) from Arabidopsis thaliana (Mouse-ear cress).